Consider the following 343-residue polypeptide: Dihydroorotate dehydrogenase (quinone) (343 aa).

FMN is bound by residues 61–65 and Thr85; that span reads AGLDK. Lys65 provides a ligand contact to substrate. Position 110–114 (110–114) interacts with substrate; it reads NRMGF. FMN contacts are provided by Asn138 and Asn171. Asn171 contacts substrate. Catalysis depends on Ser174, which acts as the Nucleophile. Asn176 serves as a coordination point for substrate. Positions 216 and 244 each coordinate FMN. 245 to 246 serves as a coordination point for substrate; the sequence is NT. FMN contacts are provided by residues Gly267, Gly296, and 317-318; that span reads YS.

Belongs to the dihydroorotate dehydrogenase family. Type 2 subfamily. As to quaternary structure, monomer. FMN is required as a cofactor.

The protein localises to the cell membrane. It catalyses the reaction (S)-dihydroorotate + a quinone = orotate + a quinol. Its pathway is pyrimidine metabolism; UMP biosynthesis via de novo pathway; orotate from (S)-dihydroorotate (quinone route): step 1/1. Functionally, catalyzes the conversion of dihydroorotate to orotate with quinone as electron acceptor. The polypeptide is Dihydroorotate dehydrogenase (quinone) (Stutzerimonas stutzeri (strain A1501) (Pseudomonas stutzeri)).